A 92-amino-acid chain; its full sequence is Small ribosomal subunit protein uS19 (92 aa).

The protein belongs to the universal ribosomal protein uS19 family.

In terms of biological role, protein S19 forms a complex with S13 that binds strongly to the 16S ribosomal RNA. This is Small ribosomal subunit protein uS19 (rpsS) from Halalkalibacterium halodurans (strain ATCC BAA-125 / DSM 18197 / FERM 7344 / JCM 9153 / C-125) (Bacillus halodurans).